The chain runs to 149 residues: Ribonuclease HI (149 aa).

The RNase H type-1 domain occupies 1–140 (MIIGYFDGLC…AYELVRRGKL (140 aa)). Mg(2+) is bound by residues Asp-7, Glu-52, Asp-76, and Asp-125. Mn(2+) is bound by residues Asp-7, Glu-52, Asp-76, and Asp-125. Cys-58 and Cys-145 are oxidised to a cystine.

Monomer. It depends on Mn(2+) as a cofactor. Mg(2+) serves as cofactor. Co(2+) is required as a cofactor. The cofactor is Ni(2+). In terms of processing, the disulfide bond confers considerable stability to the protein.

The protein resides in the cytoplasm. It carries out the reaction Endonucleolytic cleavage to 5'-phosphomonoester.. Functionally, nuclease that specifically degrades the RNA of RNA-DNA hybrids. Endonucleolytically removes RNA primers from the Okazaki fragments of lagging strand synthesis on its own. In the presence of Mn(2+) or Co(2+) can also cleave an RNA-RNA hybrid; the dsRNase activity is 10- 100-fold lower than RNase H activity. Complements the temperature-sensitive phenotype of an E.coli double rnhA/rnhB (RNase H) disruption mutant. The sequence is that of Ribonuclease HI (rnhA) from Sulfurisphaera tokodaii (strain DSM 16993 / JCM 10545 / NBRC 100140 / 7) (Sulfolobus tokodaii).